The following is a 502-amino-acid chain: MEFSVKSGSPEKQRSACIVVGVYEPRRLSGIAEQLDKISEGYISNLLRRGDLEGKPGQMLLLHHVPNVLSERVLLVGCGKERELDERQYKQIITKTINTLNDTGSMEAVCFLTELHVKGRDTYWKVREAVESTQNSLYSFDALKTRKGETRRPLRKLVFNVPTRRELTVGERAIEHGMAVSTGTQLCRDVANMPPNICNPAYLASQARQIAENHENLTVTTVGEEQMAKLGMNSYLAVGRGSHNESVMTVMEYKGAVDSTEKPIVLVGKGLTFDSGGISLKPGEAMDEMKYDMGGAAGVIGTMLALCELKLPINVVGILAGCENMPSSNAYRPGDILTTMSGQTVEVLNTDAEGRLVLCDVLTYVERFDPELVVDTATLTGACVIALGKHASGLFSSHNPLAHELLNAGEQSGDRAWRMPLWDEYQEHLESPFADMTNLGGRPAGAITAACFLSRFAKKYNWAHLDVAGTAWNSGANKGSTGRPVPLLTQFLINRAGVEQGE.

Mn(2+) contacts are provided by K269 and D274. Residue K281 is part of the active site. D292, D351, and E353 together coordinate Mn(2+). R355 is an active-site residue.

Belongs to the peptidase M17 family. Requires Mn(2+) as cofactor.

Its subcellular location is the cytoplasm. It catalyses the reaction Release of an N-terminal amino acid, Xaa-|-Yaa-, in which Xaa is preferably Leu, but may be other amino acids including Pro although not Arg or Lys, and Yaa may be Pro. Amino acid amides and methyl esters are also readily hydrolyzed, but rates on arylamides are exceedingly low.. The catalysed reaction is Release of an N-terminal amino acid, preferentially leucine, but not glutamic or aspartic acids.. Functionally, presumably involved in the processing and regular turnover of intracellular proteins. Catalyzes the removal of unsubstituted N-terminal amino acids from various peptides. This chain is Probable cytosol aminopeptidase, found in Shewanella loihica (strain ATCC BAA-1088 / PV-4).